A 236-amino-acid chain; its full sequence is CD81 antigen (236 aa).

Residues 1–12 (MGVEGCTKCIKY) lie on the Cytoplasmic side of the membrane. A helical transmembrane segment spans residues 13-33 (LLFVFNFVFWLAGGVILGVAL). Residues 34–63 (WLRHDPQTTNLLYLELGDKPAPNTFYVGIY) lie on the Extracellular side of the membrane. Residues 64-84 (ILIAVGAVMMFVGFLGCYGAI) traverse the membrane as a helical segment. At 85–89 (QESQC) the chain is on the cytoplasmic side. Residues 90–112 (LLGTFFTCLVILFACEVAAGIWG) traverse the membrane as a helical segment. Topologically, residues 113-201 (FVNKDQIAKD…QKIDDLFSGK (89 aa)) are extracellular. 2 disulfide bridges follow: Cys156/Cys190 and Cys157/Cys175. A helical transmembrane segment spans residues 202–224 (LYLIGIAAIVVAVIMIFEMILSM). Residue Glu219 participates in cholesterol binding. Residues 225–236 (VLCCGIRNSSVY) are Cytoplasmic-facing.

This sequence belongs to the tetraspanin (TM4SF) family. Homodimer. Part of a complex composed of CD19, CR2/CD21, CD81 and IFITM1/CD225 in the membrane of mature B cells. Interacts (via the second extracellular domain) with CD19; this interaction is initiated early during biosynthesis in the ER and enables trafficking of only properly folded CD19. Part of a complex that includes MHC class II/HLA-DR molecules and IFITM1. Interacts with IFITM1. Interacts with IFITM2 and IFITM3. Part of integrin-tetraspanin complex composed of CD9, CD81, beta-1 and beta-2 integrins in the membrane of monocyte/macrophages. Interacts (via the second extracellular domain) with integrin ITGAV:ITGB3. Interacts with CD247/CD3 zeta, ICAM1 and CD9 at the immune synapse on T cell membrane. Part of a GPCR-tetraspanin complex consisting at least of ADGRG1, CD81, possibly CD9, and GNA11 in which CD81 enhances the association of ADGRG1 with GNA11. Part of a complex composed of CD9, CD81, PTGFRN and IGSF8. Interacts directly with IGSF8. Interacts with CD53 and SCIMP. Interacts with SAMHD1 (via its C-terminus). Interacts with glypican GPC3 and with the transcriptional repressor HHEX; binding to GPC3 decreases the availability of free CD81 for binding to HHEX, resulting in nuclear translocation of HHEX and transcriptional repression. Interacts with CLDN1. Interacts with CLDN6 and CLDN9. Not glycosylated. Post-translationally, likely constitutively palmitoylated at low levels. Protein palmitoylation is up-regulated upon coligation of BCR and CD9-C2R-CD81 complexes in lipid rafts.

The protein localises to the cell membrane. It localises to the basolateral cell membrane. In terms of biological role, structural component of specialized membrane microdomains known as tetraspanin-enriched microdomains (TERMs), which act as platforms for receptor clustering and signaling. Essential for trafficking and compartmentalization of CD19 receptor on the surface of activated B cells. Upon initial encounter with microbial pathogens, enables the assembly of CD19-CR2/CD21 and B cell receptor (BCR) complexes at signaling TERMs, lowering the threshold dose of antigen required to trigger B cell clonal expansion and antibody production. In T cells, facilitates the localization of CD247/CD3 zeta at antigen-induced synapses with B cells, providing for costimulation and polarization toward T helper type 2 phenotype. Present in MHC class II compartments, may also play a role in antigen presentation. Can act both as positive and negative regulator of homotypic or heterotypic cell-cell fusion processes. Positively regulates sperm-egg fusion and may be involved in acrosome reaction. In myoblasts, associates with CD9 and PTGFRN and inhibits myotube fusion during muscle regeneration. In macrophages, associates with CD9 and beta-1 and beta-2 integrins, and prevents macrophage fusion into multinucleated giant cells specialized in ingesting complement-opsonized large particles. Also prevents the fusion of mononuclear cell progenitors into osteoclasts in charge of bone resorption. May regulate the compartmentalization of enzymatic activities. In T cells, defines the subcellular localization of dNTPase SAMHD1 and permits its degradation by the proteasome, thereby controlling intracellular dNTP levels. Also involved in cell adhesion and motility. Positively regulates integrin-mediated adhesion of macrophages, particularly relevant for the inflammatory response in the lung. The polypeptide is CD81 antigen (CD81) (Pan troglodytes (Chimpanzee)).